A 313-amino-acid chain; its full sequence is Pyrimidine-specific ribonucleoside hydrolase RihA (313 aa).

The active site involves His240.

This sequence belongs to the IUNH family. RihA subfamily.

Functionally, hydrolyzes cytidine or uridine to ribose and cytosine or uracil, respectively. This Enterobacter sp. (strain 638) protein is Pyrimidine-specific ribonucleoside hydrolase RihA.